A 518-amino-acid polypeptide reads, in one-letter code: ATP synthase subunit beta 2 (518 aa).

ATP is bound at residue 154–161; sequence GGAGVGKT. The tract at residues 455–518 is disordered; the sequence is IDEAKGKAKP…TDHAADTHES (64 aa). 2 stretches are compositionally biased toward basic and acidic residues: residues 473–485 and 507–518; these read PDSK…DPKP and PETDHAADTHES.

Belongs to the ATPase alpha/beta chains family. As to quaternary structure, F-type ATPases have 2 components, CF(1) - the catalytic core - and CF(0) - the membrane proton channel. CF(1) has five subunits: alpha(3), beta(3), gamma(1), delta(1), epsilon(1). CF(0) has three main subunits: a(1), b(2) and c(9-12). The alpha and beta chains form an alternating ring which encloses part of the gamma chain. CF(1) is attached to CF(0) by a central stalk formed by the gamma and epsilon chains, while a peripheral stalk is formed by the delta and b chains.

The protein resides in the cell inner membrane. It catalyses the reaction ATP + H2O + 4 H(+)(in) = ADP + phosphate + 5 H(+)(out). In terms of biological role, produces ATP from ADP in the presence of a proton gradient across the membrane. The catalytic sites are hosted primarily by the beta subunits. This Albidiferax ferrireducens (strain ATCC BAA-621 / DSM 15236 / T118) (Rhodoferax ferrireducens) protein is ATP synthase subunit beta 2.